The chain runs to 273 residues: NADPH-dependent 7-cyano-7-deazaguanine reductase (273 aa).

81–83 contacts substrate; it reads VES. Residue 83 to 84 coordinates NADPH; sequence SK. Cys179 acts as the Thioimide intermediate in catalysis. The active-site Proton donor is the Asp186. 218-219 serves as a coordination point for substrate; the sequence is AE. Residue 247 to 248 coordinates NADPH; that stretch reads RG.

This sequence belongs to the GTP cyclohydrolase I family. QueF type 2 subfamily. As to quaternary structure, homodimer.

Its subcellular location is the cytoplasm. It carries out the reaction 7-aminomethyl-7-carbaguanine + 2 NADP(+) = 7-cyano-7-deazaguanine + 2 NADPH + 3 H(+). It participates in tRNA modification; tRNA-queuosine biosynthesis. Catalyzes the NADPH-dependent reduction of 7-cyano-7-deazaguanine (preQ0) to 7-aminomethyl-7-deazaguanine (preQ1). The sequence is that of NADPH-dependent 7-cyano-7-deazaguanine reductase from Rickettsia canadensis (strain McKiel).